The sequence spans 188 residues: Peptidyl-tRNA hydrolase (188 aa).

Tyr18 contacts tRNA. His23 acts as the Proton acceptor in catalysis. TRNA contacts are provided by Tyr67, Asn69, and Asn115.

The protein belongs to the PTH family. In terms of assembly, monomer.

It is found in the cytoplasm. It catalyses the reaction an N-acyl-L-alpha-aminoacyl-tRNA + H2O = an N-acyl-L-amino acid + a tRNA + H(+). Its function is as follows. Hydrolyzes ribosome-free peptidyl-tRNAs (with 1 or more amino acids incorporated), which drop off the ribosome during protein synthesis, or as a result of ribosome stalling. Catalyzes the release of premature peptidyl moieties from peptidyl-tRNA molecules trapped in stalled 50S ribosomal subunits, and thus maintains levels of free tRNAs and 50S ribosomes. In Salinibacter ruber (strain DSM 13855 / M31), this protein is Peptidyl-tRNA hydrolase.